Consider the following 235-residue polypeptide: Glycerol-3-phosphate acyltransferase (235 aa).

Helical transmembrane passes span 4 to 24, 56 to 76, 90 to 110, 126 to 146, 152 to 172, and 191 to 211; these read LIVI…IIAG, AVTL…VVFF, VALR…TVFA, FGIA…TIFV, VASI…KYLF, and IHDS…FAII.

The protein belongs to the PlsY family. In terms of assembly, probably interacts with PlsX.

The protein localises to the cell inner membrane. The catalysed reaction is an acyl phosphate + sn-glycerol 3-phosphate = a 1-acyl-sn-glycero-3-phosphate + phosphate. Its pathway is lipid metabolism; phospholipid metabolism. Its function is as follows. Catalyzes the transfer of an acyl group from acyl-phosphate (acyl-PO(4)) to glycerol-3-phosphate (G3P) to form lysophosphatidic acid (LPA). This enzyme utilizes acyl-phosphate as fatty acyl donor, but not acyl-CoA or acyl-ACP. In Prosthecochloris aestuarii (strain DSM 271 / SK 413), this protein is Glycerol-3-phosphate acyltransferase.